Reading from the N-terminus, the 315-residue chain is MSDSLRIIFAGTPDFAARHLDALLTSGHNVVGVFTQPDRPAGRGKKLMPSPVKVLAEEKGLPVFQPVSLRPQENQQLVADLHADVMVVVAYGLILPKAVLDMPRLGCINVHGSLLPRWRGAAPIQRSLWAGDAETGVTIMQMDVGLDTGDMLYKLACPITAEDTSGSLYNKLAELGPQGLITTLKQLADGTAAPEAQNEALVTHAEKLSKEEARIDWSLSAVQLERCIRAFNPWPMSWLEIDGQPVKVWQASVIEDATQSLPGTILAATKQGIQVATGKGILNLLSLQPAGKKAMSAQDLLNSRREWFIPGNHLA.

(6S)-5,6,7,8-tetrahydrofolate is bound at residue 113–116 (SLLP).

Belongs to the Fmt family.

The catalysed reaction is L-methionyl-tRNA(fMet) + (6R)-10-formyltetrahydrofolate = N-formyl-L-methionyl-tRNA(fMet) + (6S)-5,6,7,8-tetrahydrofolate + H(+). In terms of biological role, attaches a formyl group to the free amino group of methionyl-tRNA(fMet). The formyl group appears to play a dual role in the initiator identity of N-formylmethionyl-tRNA by promoting its recognition by IF2 and preventing the misappropriation of this tRNA by the elongation apparatus. The chain is Methionyl-tRNA formyltransferase from Salmonella gallinarum (strain 287/91 / NCTC 13346).